We begin with the raw amino-acid sequence, 81 residues long: Conotoxin ArMKLT2-01 (81 aa).

An N-terminal signal peptide occupies residues Met-1 to Ala-19. The propeptide occupies Lys-20–Ala-43. Intrachain disulfides connect Cys-46–Cys-61, Cys-53–Cys-65, and Cys-60–Cys-74.

Belongs to the conotoxin O1 superfamily. In terms of tissue distribution, expressed by the venom duct.

Its subcellular location is the secreted. The chain is Conotoxin ArMKLT2-01 from Conus arenatus (Sand-dusted cone).